A 198-amino-acid polypeptide reads, in one-letter code: Probable thymidylate kinase (198 aa).

7 to 14 lines the ATP pocket; sequence GIDGAGKS.

Belongs to the thymidylate kinase family.

The catalysed reaction is dTMP + ATP = dTDP + ADP. This is Probable thymidylate kinase from Methanocorpusculum labreanum (strain ATCC 43576 / DSM 4855 / Z).